Here is a 169-residue protein sequence, read N- to C-terminus: Menaquinol:cytochrome c reductase iron-sulfur subunit (169 aa).

The Rieske domain occupies 62–160; that stretch reads EPKRFDFKVK…FEVKDGKLYL (99 aa). [2Fe-2S] cluster is bound by residues C102, H104, C123, and H126. Cysteines 107 and 125 form a disulfide.

It belongs to the Rieske iron-sulfur protein family. In terms of assembly, the main subunits of the menaquinol:cytochrome c complex are a Rieske-type iron-sulfur protein (QcrA), a cytochrome b (QcrB) and a cytochrome c (QcrC). It depends on [2Fe-2S] cluster as a cofactor.

Component of the menaquinol:cytochrome c reductase complex. The Rieske protein is a high potential 2Fe-2S protein. This Geobacillus thermodenitrificans protein is Menaquinol:cytochrome c reductase iron-sulfur subunit (qcrA).